The sequence spans 688 residues: Thyroid hormone-induced protein B (688 aa).

A signal peptide spans 1–20 (MMLSHWVLLLSLGAVWLAEG). 4 consecutive MAM domains span residues 26–169 (GSCT…GYCI), 170–330 (ECDF…SCSG), 341–500 (AGCD…SCKI), and 509–669 (GKCT…PCND). N-linked (GlcNAc...) asparagine glycans are attached at residues Asn-32 and Asn-135. 2 N-linked (GlcNAc...) asparagine glycosylation sites follow: Asn-358 and Asn-668.

It is found in the membrane. The protein localises to the secreted. The protein resides in the extracellular space. This chain is Thyroid hormone-induced protein B, found in Xenopus laevis (African clawed frog).